The sequence spans 172 residues: 3-hydroxydecanoyl-[acyl-carrier-protein] dehydratase (172 aa).

H71 is an active-site residue.

It belongs to the thioester dehydratase family. FabA subfamily. Homodimer.

The protein localises to the cytoplasm. The catalysed reaction is a (3R)-hydroxyacyl-[ACP] = a (2E)-enoyl-[ACP] + H2O. It carries out the reaction (3R)-hydroxydecanoyl-[ACP] = (2E)-decenoyl-[ACP] + H2O. The enzyme catalyses (2E)-decenoyl-[ACP] = (3Z)-decenoyl-[ACP]. It participates in lipid metabolism; fatty acid biosynthesis. Its function is as follows. Necessary for the introduction of cis unsaturation into fatty acids. Catalyzes the dehydration of (3R)-3-hydroxydecanoyl-ACP to E-(2)-decenoyl-ACP and then its isomerization to Z-(3)-decenoyl-ACP. Can catalyze the dehydratase reaction for beta-hydroxyacyl-ACPs with saturated chain lengths up to 16:0, being most active on intermediate chain length. In Escherichia fergusonii (strain ATCC 35469 / DSM 13698 / CCUG 18766 / IAM 14443 / JCM 21226 / LMG 7866 / NBRC 102419 / NCTC 12128 / CDC 0568-73), this protein is 3-hydroxydecanoyl-[acyl-carrier-protein] dehydratase.